Here is a 542-residue protein sequence, read N- to C-terminus: Chaperonin GroEL 1 (542 aa).

Residues 29–32 (TIGP), 86–90 (DGTTT), Gly414, 479–481 (DAL), and Asp495 each bind ATP.

The protein belongs to the chaperonin (HSP60) family. Forms a cylinder of 14 subunits composed of two heptameric rings stacked back-to-back. Interacts with the co-chaperonin GroES.

The protein resides in the cytoplasm. It catalyses the reaction ATP + H2O + a folded polypeptide = ADP + phosphate + an unfolded polypeptide.. Together with its co-chaperonin GroES, plays an essential role in assisting protein folding. The GroEL-GroES system forms a nano-cage that allows encapsulation of the non-native substrate proteins and provides a physical environment optimized to promote and accelerate protein folding. The protein is Chaperonin GroEL 1 of Synechococcus sp. (strain JA-3-3Ab) (Cyanobacteria bacterium Yellowstone A-Prime).